A 592-amino-acid chain; its full sequence is Aspartate--tRNA(Asp/Asn) ligase (592 aa).

Glutamate 176 lines the L-aspartate pocket. Positions 200–203 (QLYK) are aspartate. Arginine 222 is a binding site for L-aspartate. ATP-binding positions include 222–224 (RDE) and glutamine 231. Residue histidine 452 participates in L-aspartate binding. Glutamate 486 lines the ATP pocket. Arginine 493 is an L-aspartate binding site. 538 to 541 (GVDR) lines the ATP pocket.

It belongs to the class-II aminoacyl-tRNA synthetase family. Type 1 subfamily. Homodimer.

The protein localises to the cytoplasm. The catalysed reaction is tRNA(Asx) + L-aspartate + ATP = L-aspartyl-tRNA(Asx) + AMP + diphosphate. Functionally, aspartyl-tRNA synthetase with relaxed tRNA specificity since it is able to aspartylate not only its cognate tRNA(Asp) but also tRNA(Asn). Reaction proceeds in two steps: L-aspartate is first activated by ATP to form Asp-AMP and then transferred to the acceptor end of tRNA(Asp/Asn). In Rhodopirellula baltica (strain DSM 10527 / NCIMB 13988 / SH1), this protein is Aspartate--tRNA(Asp/Asn) ligase.